A 408-amino-acid polypeptide reads, in one-letter code: tRNA(Ile)-lysidine synthase (408 aa).

ATP is bound at residue 27-32 (SGGGDS).

It belongs to the tRNA(Ile)-lysidine synthase family.

The protein resides in the cytoplasm. The enzyme catalyses cytidine(34) in tRNA(Ile2) + L-lysine + ATP = lysidine(34) in tRNA(Ile2) + AMP + diphosphate + H(+). Its function is as follows. Ligates lysine onto the cytidine present at position 34 of the AUA codon-specific tRNA(Ile) that contains the anticodon CAU, in an ATP-dependent manner. Cytidine is converted to lysidine, thus changing the amino acid specificity of the tRNA from methionine to isoleucine. This is tRNA(Ile)-lysidine synthase from Caulobacter vibrioides (strain ATCC 19089 / CIP 103742 / CB 15) (Caulobacter crescentus).